We begin with the raw amino-acid sequence, 223 residues long: Serine/threonine/tyrosine-interacting protein (223 aa).

The region spanning 28 to 176 (EMQEILPGLF…LQEYEAIYLA (149 aa)) is the Tyrosine-protein phosphatase domain. The Interaction with FBXW7 motif lies at 76-78 (FQQ). 3 positions are modified to phosphoserine: Ser-184, Ser-193, and Ser-201. The disordered stretch occupies residues 197–223 (GTTGSLKRTHEEEDDFGTMQVATAQNG).

It belongs to the protein-tyrosine phosphatase family. Non-receptor class subfamily. As to quaternary structure, interacts with MAPK1; independently of MAPK1 phosphorylation status. Interacts with CARHSP1/Crhsp-24. Interacts (via FQQ motif) with FBXW7 isoforms 1 (via F-box domain) and 3 (via F-box domain); the interaction is direct and prevents FBXW7 interaction with SKP1, a component of the SCF(FBXW7) complex. Does not interact with FBXW7 isoform 2.

It localises to the nucleus. The protein localises to the cytoplasm. It is found in the cytosol. Its function is as follows. Catalytically inactive phosphatase. Acts as a nuclear anchor for MAPK1/MAPK3 (ERK1/ERK2). Modulates cell-fate decisions and cell migration by spatiotemporal regulation of MAPK1/MAPK3 (ERK1/ERK2). By binding to the F-box of FBXW7, prevents the assembly of FBXW7 into the SCF E3 ubiquitin-protein ligase complex, and thereby inhibits degradation of its substrates. Plays a role in spermatogenesis. The protein is Serine/threonine/tyrosine-interacting protein of Homo sapiens (Human).